Consider the following 250-residue polypeptide: Small ribosomal subunit protein uS2 (250 aa).

This sequence belongs to the universal ribosomal protein uS2 family.

The chain is Small ribosomal subunit protein uS2 from Marinobacter nauticus (strain ATCC 700491 / DSM 11845 / VT8) (Marinobacter aquaeolei).